The primary structure comprises 177 residues: ATP synthase subunit delta (177 aa).

It belongs to the ATPase delta chain family. As to quaternary structure, F-type ATPases have 2 components, F(1) - the catalytic core - and F(0) - the membrane proton channel. F(1) has five subunits: alpha(3), beta(3), gamma(1), delta(1), epsilon(1). F(0) has three main subunits: a(1), b(2) and c(10-14). The alpha and beta chains form an alternating ring which encloses part of the gamma chain. F(1) is attached to F(0) by a central stalk formed by the gamma and epsilon chains, while a peripheral stalk is formed by the delta and b chains.

It is found in the cell inner membrane. F(1)F(0) ATP synthase produces ATP from ADP in the presence of a proton or sodium gradient. F-type ATPases consist of two structural domains, F(1) containing the extramembraneous catalytic core and F(0) containing the membrane proton channel, linked together by a central stalk and a peripheral stalk. During catalysis, ATP synthesis in the catalytic domain of F(1) is coupled via a rotary mechanism of the central stalk subunits to proton translocation. Its function is as follows. This protein is part of the stalk that links CF(0) to CF(1). It either transmits conformational changes from CF(0) to CF(1) or is implicated in proton conduction. In Shewanella piezotolerans (strain WP3 / JCM 13877), this protein is ATP synthase subunit delta.